The primary structure comprises 535 residues: Probable serine/threonine protein phosphatase 2A regulatory subunit B''delta (535 aa).

The disordered stretch occupies residues 67–104 (SGTNSGSNSPLASMFPARNGPPLSPRNSTGSPRIARQR). EF-hand domains are found at residues 174–209 (VPSF…GNML) and 387–422 (SSEP…QLHR). Aspartate 400, aspartate 402, asparagine 404, and glutamate 411 together coordinate Ca(2+).

As to quaternary structure, PP2A consists of a common heterodimeric core enzyme, composed of a 36 kDa catalytic subunit (subunit C) and a 65 kDa constant regulatory subunit (PR65 or subunit A), that associates with a variety of regulatory subunits. Proteins that associate with the core dimer include three families of regulatory subunits B (the R2/B/PR55/B55, R3/B''/PR72/PR130/PR59 and R5/B'/B56 families) and cell signaling molecules.

Probable regulatory subunit of type 2A protein phosphatase. The sequence is that of Probable serine/threonine protein phosphatase 2A regulatory subunit B''delta (B''DELTA) from Arabidopsis thaliana (Mouse-ear cress).